Consider the following 136-residue polypeptide: Ribosome-binding factor A (136 aa).

The protein belongs to the RbfA family. In terms of assembly, monomer. Binds 30S ribosomal subunits, but not 50S ribosomal subunits or 70S ribosomes.

It localises to the cytoplasm. Functionally, one of several proteins that assist in the late maturation steps of the functional core of the 30S ribosomal subunit. Associates with free 30S ribosomal subunits (but not with 30S subunits that are part of 70S ribosomes or polysomes). Required for efficient processing of 16S rRNA. May interact with the 5'-terminal helix region of 16S rRNA. The chain is Ribosome-binding factor A from Photorhabdus laumondii subsp. laumondii (strain DSM 15139 / CIP 105565 / TT01) (Photorhabdus luminescens subsp. laumondii).